Here is an 857-residue protein sequence, read N- to C-terminus: Bifunctional levopimaradiene synthase, chloroplastic (857 aa).

Residues 1-33 (MALPSSSLSSQIHTGATTQCIPHFHGSLNAGTS) constitute a chloroplast transit peptide. A substrate-binding site is contributed by Lys-257. Residues Asp-390 and Asp-392 each contribute to the Mg(2+) site. A DXDD motif motif is present at residues 390–393 (DIDD). Lys-477 contributes to the substrate binding site. Mg(2+) contacts are provided by Asp-609, Asp-613, Asn-753, Thr-757, and Glu-761. The DDXXD motif signature appears at 609–613 (DDLYD).

This sequence belongs to the terpene synthase family. Tpsd subfamily. The cofactor is Mg(2+).

It localises to the plastid. Its subcellular location is the chloroplast. It catalyses the reaction (2E,6E,10E)-geranylgeranyl diphosphate = (+)-copalyl diphosphate. The catalysed reaction is (+)-copalyl diphosphate = abieta-7,13-diene + diphosphate. The enzyme catalyses (+)-copalyl diphosphate = abieta-8(14),12-diene + diphosphate. It carries out the reaction (+)-copalyl diphosphate = neoabietadiene + diphosphate. The protein operates within terpene metabolism; oleoresin biosynthesis. Its function is as follows. Involved in defensive oleoresin formation in conifers in response to insect attack or other injury. Involved in diterpene (C20) olefins biosynthesis. Bifunctional enzyme that catalyzes two sequential cyclizations of geranylgeranyl diphosphate (GGPP) to levopimaradiene. Levopimaradiene is the major products of the enzyme with abietadiene and neoabietadiene. No activity with farnesyl diphosphate (FPP) as substrate. This is Bifunctional levopimaradiene synthase, chloroplastic from Pinus banksiana (Jack pine).